Consider the following 564-residue polypeptide: Dihydroxy-acid dehydratase (564 aa).

Position 53 (C53) interacts with [2Fe-2S] cluster. D85 lines the Mg(2+) pocket. C126 is a [2Fe-2S] cluster binding site. Positions 127 and 128 each coordinate Mg(2+). The residue at position 128 (K128) is an N6-carboxylysine. C203 contributes to the [2Fe-2S] cluster binding site. E454 serves as a coordination point for Mg(2+). S480 serves as the catalytic Proton acceptor.

Belongs to the IlvD/Edd family. In terms of assembly, homodimer. The cofactor is [2Fe-2S] cluster. It depends on Mg(2+) as a cofactor.

The enzyme catalyses (2R)-2,3-dihydroxy-3-methylbutanoate = 3-methyl-2-oxobutanoate + H2O. The catalysed reaction is (2R,3R)-2,3-dihydroxy-3-methylpentanoate = (S)-3-methyl-2-oxopentanoate + H2O. Its pathway is amino-acid biosynthesis; L-isoleucine biosynthesis; L-isoleucine from 2-oxobutanoate: step 3/4. It participates in amino-acid biosynthesis; L-valine biosynthesis; L-valine from pyruvate: step 3/4. Its function is as follows. Functions in the biosynthesis of branched-chain amino acids. Catalyzes the dehydration of (2R,3R)-2,3-dihydroxy-3-methylpentanoate (2,3-dihydroxy-3-methylvalerate) into 2-oxo-3-methylpentanoate (2-oxo-3-methylvalerate) and of (2R)-2,3-dihydroxy-3-methylbutanoate (2,3-dihydroxyisovalerate) into 2-oxo-3-methylbutanoate (2-oxoisovalerate), the penultimate precursor to L-isoleucine and L-valine, respectively. The sequence is that of Dihydroxy-acid dehydratase from Leifsonia xyli subsp. xyli (strain CTCB07).